We begin with the raw amino-acid sequence, 549 residues long: Undecaprenyl phosphate-alpha-4-amino-4-deoxy-L-arabinose arabinosyl transferase (549 aa).

12 consecutive transmembrane segments (helical) span residues L9–I29, L80–L100, S112–A132, P136–G156, I166–L186, L204–L224, P256–P276, Q288–S308, L312–V332, N346–L366, F376–W396, and A402–P422.

This sequence belongs to the glycosyltransferase 83 family.

The protein localises to the cell inner membrane. The catalysed reaction is 4-amino-4-deoxy-alpha-L-arabinopyranosyl di-trans,octa-cis-undecaprenyl phosphate + lipid IVA = lipid IIA + di-trans,octa-cis-undecaprenyl phosphate.. Its pathway is lipopolysaccharide metabolism; 4-amino-4-deoxy-beta-L-arabinose-lipid A biosynthesis. Its function is as follows. Catalyzes the transfer of the L-Ara4N moiety of the glycolipid undecaprenyl phosphate-alpha-L-Ara4N to lipid A. The modified arabinose is attached to lipid A and is required for resistance to polymyxin and cationic antimicrobial peptides. This Pseudomonas aeruginosa (strain UCBPP-PA14) protein is Undecaprenyl phosphate-alpha-4-amino-4-deoxy-L-arabinose arabinosyl transferase.